The chain runs to 220 residues: Putative amino-acid transporter YisU (220 aa).

A run of 6 helical transmembrane segments spans residues F15–L35, T67–F87, T89–I109, A128–I148, W161–A181, and M195–V215.

It belongs to the LysE/ArgO transporter (TC 2.A.75) family.

The protein resides in the cell membrane. The sequence is that of Putative amino-acid transporter YisU (yisU) from Bacillus subtilis (strain 168).